We begin with the raw amino-acid sequence, 227 residues long: ATP phosphoribosyltransferase (227 aa).

This sequence belongs to the ATP phosphoribosyltransferase family. Short subfamily. In terms of assembly, heteromultimer composed of HisG and HisZ subunits.

It is found in the cytoplasm. The catalysed reaction is 1-(5-phospho-beta-D-ribosyl)-ATP + diphosphate = 5-phospho-alpha-D-ribose 1-diphosphate + ATP. It functions in the pathway amino-acid biosynthesis; L-histidine biosynthesis; L-histidine from 5-phospho-alpha-D-ribose 1-diphosphate: step 1/9. In terms of biological role, catalyzes the condensation of ATP and 5-phosphoribose 1-diphosphate to form N'-(5'-phosphoribosyl)-ATP (PR-ATP). Has a crucial role in the pathway because the rate of histidine biosynthesis seems to be controlled primarily by regulation of HisG enzymatic activity. This Rhodospirillum rubrum (strain ATCC 11170 / ATH 1.1.1 / DSM 467 / LMG 4362 / NCIMB 8255 / S1) protein is ATP phosphoribosyltransferase.